The chain runs to 245 residues: tRNA pseudouridine synthase A 1 (245 aa).

The active-site Nucleophile is the D53. Y111 contributes to the substrate binding site.

This sequence belongs to the tRNA pseudouridine synthase TruA family. In terms of assembly, homodimer.

The catalysed reaction is uridine(38/39/40) in tRNA = pseudouridine(38/39/40) in tRNA. Functionally, formation of pseudouridine at positions 38, 39 and 40 in the anticodon stem and loop of transfer RNAs. This Clostridium tetani (strain Massachusetts / E88) protein is tRNA pseudouridine synthase A 1.